We begin with the raw amino-acid sequence, 550 residues long: Cytochrome P450 monooxygenase FFUJ_09176 (550 aa).

Residues 1–31 (MLQTIPMPSRELTIALAVLSLLMVLVQRAGS) form the signal peptide. The segment covering 430-441 (FIPERFEGDTRS) has biased composition (basic and acidic residues). The segment at 430–451 (FIPERFEGDTRSSQESAASPDV) is disordered. C466 provides a ligand contact to heme.

This sequence belongs to the cytochrome P450 family.

Cytochrome P450 monooxygenase; part of the DMATS1 gene cluster that mediates the biosynthesis of a reversely N-prenylated monomeric L-tryptophan (r-N-DMAT). Seems not to contribute to the final DMATS1 product. In Gibberella fujikuroi (strain CBS 195.34 / IMI 58289 / NRRL A-6831) (Bakanae and foot rot disease fungus), this protein is Cytochrome P450 monooxygenase FFUJ_09176.